Reading from the N-terminus, the 530-residue chain is NAD(+) kinase (530 aa).

3 disordered regions span residues Met-1–Asn-27, Ile-57–Asn-99, and Ser-486–Val-530. Over residues Trp-13 to Asn-25 the composition is skewed to basic and acidic residues. Residues Ser-59 to Leu-75 show a composition bias toward low complexity. Residues Ile-88–Asn-99 are compositionally biased toward polar residues. 2 positions are modified to phosphoserine: Ser-499 and Ser-503. Residues Ser-499–Val-508 show a composition bias toward acidic residues.

Belongs to the NAD kinase family. In terms of assembly, homohexamer.

It catalyses the reaction NAD(+) + ATP = ADP + NADP(+) + H(+). Its function is as follows. Specifically phosphorylates NAD in the presence of ATP, dATP, or CTP as phosphoryl donors. This is NAD(+) kinase (UTR1) from Saccharomyces cerevisiae (strain ATCC 204508 / S288c) (Baker's yeast).